Reading from the N-terminus, the 202-residue chain is MNRLFLILLLIFSHEVFSQTSAEVLQSKLNAIQTMTANFSQIVKAKNREVSRSSGSMALQRPGRFRWQTKDPLEQLIVADGQKMWIYDVDLEQVTVKNQEKGLGGTAALFLSGYDETLTHDFDVSEKQKGKLTVFDLKSKSAKENFQRIKLIFSQSTLIGLELYDQLGQITDVKLVQIKSNPKLPAKLFQFNPPKGVDVVKQ.

Residues 1-18 (MNRLFLILLLIFSHEVFS) form the signal peptide.

It belongs to the LolA family. In terms of assembly, monomer.

It is found in the periplasm. Participates in the translocation of lipoproteins from the inner membrane to the outer membrane. Only forms a complex with a lipoprotein if the residue after the N-terminal Cys is not an aspartate (The Asp acts as a targeting signal to indicate that the lipoprotein should stay in the inner membrane). This Legionella pneumophila (strain Lens) protein is Outer-membrane lipoprotein carrier protein.